Reading from the N-terminus, the 788-residue chain is METLLGGLLAFGMAFAVVDACPKYCVCQNLSESLGTLCPSKGLLFVPPDIDRRTVELRLGGNFIIHIGRQDFANMTGLVDLTLSRNTISHIQPFSFLDLESLRSLHLDSNRLPSLGEDTLRGLVNLQHLIVNNNQLGGIADDAFEDFLLTLEDLDLSYNNLHGLPWDSVRRMVNLHQLSLDHNLLDHIAEGTFADLQKLARLDLTSNRLQKLPPDPIFARSQASLLTATPFAPPLSFSFGGNPLHCNCELLWLRRLERDDDLETCGSPGSLKGRYFWHIREEEFVCEPPLITQHTHKLLVLEGQAATLKCKAIGDPSPLIHWVAPDDRLVGNSSRTAVYDNGTLDILITTSQDSGPFTCIAANAAGEATATVEVSIVQLPHLSNSTSRMAPPKSRLSDITGSSKTSRGGGGSGAGEPPKSTPERAVLVSDVTTTSALVKWSVSKSAPRVKMYQLQYNCSDDEVLIYRMIPASNKAFVVNNLVSGTGYDLCVLAMWDDTATTLTATNIVGCAQFFTKADYPQCQSMHSQILGGTMILVIGGIIVATLLVFIVILMVRYKVCNHDTPGKMAAATVSNVYSQTNGSQPPPLGGIPVGQLPQAPPKVVVRNELMDFSTSLARACDSSSSSSLGSGEAAGLGRGPWRLPPPAPRPKPSLDRLMGAFASLDLKSQRKEELLDSRTPAGRGAGTSSRGHHSDREPLLGPPATRARSLLPLPLEGKAKRSHSFDMGDFAAAAAAVPGGYSPPRRVSNIWTKRSLSVNGMLLPFEESDLVGARGTFGSSEWVMESTV.

An N-terminal signal peptide occupies residues 1-20 (METLLGGLLAFGMAFAVVDA). The 32-residue stretch at 21–52 (CPKYCVCQNLSESLGTLCPSKGLLFVPPDIDR) folds into the LRRNT domain. At 21 to 534 (CPKYCVCQNL…MHSQILGGTM (514 aa)) the chain is on the extracellular side. Asn-29 carries an N-linked (GlcNAc...) asparagine glycan. 7 LRR repeats span residues 53–74 (RTVE…DFAN), 77–98 (GLVD…SFLD), 101–122 (SLRS…TLRG), 125–146 (NLQH…AFED), 150–171 (TLED…SVRR), 174–195 (NLHQ…TFAD), and 198–219 (KLAR…PIFA). In terms of domain architecture, LRRCT spans 242–288 (NPLHCNCELLWLRRLERDDDLETCGSPGSLKGRYFWHIREEEFVCEP). In terms of domain architecture, Ig-like spans 289–375 (PLITQHTHKL…GEATATVEVS (87 aa)). Cys-310 and Cys-359 are oxidised to a cystine. N-linked (GlcNAc...) asparagine glycosylation is found at Asn-332, Asn-341, and Asn-384. The tract at residues 383 to 423 (SNSTSRMAPPKSRLSDITGSSKTSRGGGGSGAGEPPKSTPE) is disordered. The 97-residue stretch at 422 to 518 (PERAVLVSDV…GCAQFFTKAD (97 aa)) folds into the Fibronectin type-III domain. The helical transmembrane segment at 535-555 (ILVIGGIIVATLLVFIVILMV) threads the bilayer. The Cytoplasmic segment spans residues 556 to 788 (RYKVCNHDTP…SSEWVMESTV (233 aa)). Over residues 620-631 (CDSSSSSSLGSG) the composition is skewed to low complexity. 2 disordered regions span residues 620-655 (CDSS…PSLD) and 668-711 (SQRK…RSLL). Residues 642-651 (RLPPPAPRPK) show a composition bias toward pro residues. A PDZ-binding motif is present at residues 785–788 (ESTV).

Belongs to the LRFN family. Forms heteromeric complexes with LRFN1, LRFN3, LRFN4 and LRFN5. Can form homomeric complexes, but not across cell junctions. Interacts with DLG4. Directly interacts with DLG1, DLG2 and DLG3. Directly interacts with 2 NMDA receptor subunits GRIN1 and GRIN2A. Post-translationally, glycosylated. Predominantly expressed in the brain, with a weak, but broad expression in the cerebral cortex and diencephalic nuclei. Strongly expressed in both the pyramidal layer and the dentate gyrus of the hippocampus. Also detected in other parts of the central nervous system, including the olfactory bulb, pons, cerebellum, and medulla oblongata, as well as in the peripheral nervous system, such as the ganglia of cranial nerves and the dorsal root ganglion during gestation.

The protein resides in the membrane. Its subcellular location is the synapse. It is found in the postsynaptic cell membrane. Functionally, promotes neurite outgrowth in hippocampal neurons. Enhances the cell surface expression of 2 NMDA receptor subunits GRIN1 and GRIN2A. May play a role in redistributing DLG4 to the cell periphery. This Mus musculus (Mouse) protein is Leucine-rich repeat and fibronectin type-III domain-containing protein 2 (Lrfn2).